Reading from the N-terminus, the 312-residue chain is Methionyl-tRNA formyltransferase (312 aa).

S109 to P112 provides a ligand contact to (6S)-5,6,7,8-tetrahydrofolate.

It belongs to the Fmt family.

It carries out the reaction L-methionyl-tRNA(fMet) + (6R)-10-formyltetrahydrofolate = N-formyl-L-methionyl-tRNA(fMet) + (6S)-5,6,7,8-tetrahydrofolate + H(+). In terms of biological role, attaches a formyl group to the free amino group of methionyl-tRNA(fMet). The formyl group appears to play a dual role in the initiator identity of N-formylmethionyl-tRNA by promoting its recognition by IF2 and preventing the misappropriation of this tRNA by the elongation apparatus. In Caulobacter sp. (strain K31), this protein is Methionyl-tRNA formyltransferase.